The following is a 143-amino-acid chain: Alpha-S2-casein-like B (143 aa).

An N-terminal signal peptide occupies residues 1-15 (MKFIILTCLLAVALA).

This sequence belongs to the alpha-casein family. Mammary gland specific. Secreted in milk.

It is found in the secreted. In terms of biological role, important role in the capacity of milk to transport calcium phosphate. The sequence is that of Alpha-S2-casein-like B (Csn1s2b) from Mus musculus (Mouse).